Reading from the N-terminus, the 546-residue chain is MPLSLLLACLFTTVTLQSPVVLDPCSAYISLNEPWRNTDHQFDESQSQPLCDNHMDGEWYRFTGMAGDAMPTFCIPENHCGTHAPVWLNGSHPLEGDGIVQRQACASFKGNCCLWNTTVEVKACPGGYYVYRLAKPSVCFHIYCGHFYDICDEDCHGSCLDTTECACSPGTSLGPDGQTCFDENECEHNNGGCSEICVNLKNSHRCACGVGRVLRSDGKTCEDIEGCHSNNGGCSHSCLGSEKGYQCECPRGLVLSEDNHTCQVPVLCKSSAIEVSVPRELVGGLELFLTNTSCRGVSNGTHVNIIFSLKTCGTVVDVVNDKIVASNLVTGLPKQTPGSSGDIIIRTSKLLIPVTCEFPRLYTISEGYVPNLRNAPLEIRSRNHGIFPFTLEIFKDHEFEEPYRETLPTLKLRDSLYFGIEPLVHVSGLESLVESCFATPTAKVDEILKYYLIRDGCVSDDSVKQYSSRDHLAKHFQVPVFKFVGKDHKEVFLHCRVLVCGVLDERSRCAQGCHRRVRREAGEDEDSAGLQSQTLTGGPISIDWEE.

The N-terminal stretch at 1-16 (MPLSLLLACLFTTVTL) is a signal peptide. N-linked (GlcNAc...) asparagine glycosylation is found at Asn-89 and Asn-116. Residues 182-222 (DENECEHNNGGCSEICVNLKNSHRCACGVGRVLRSDGKTCE) enclose the EGF-like; calcium-binding domain. 3 disulfides stabilise this stretch: Cys-186-Cys-197, Cys-193-Cys-206, and Cys-208-Cys-221. Residues 261–516 (TCQVPVLCKS…SRCAQGCHRR (256 aa)) enclose the ZP domain. Asn-299 carries N-linked (GlcNAc...) asparagine glycosylation. A disordered region spans residues 524 to 546 (DEDSAGLQSQTLTGGPISIDWEE).

It is found in the nucleus envelope. In terms of biological role, may be involved in hepatocellular function and development. In Rattus norvegicus (Rat), this protein is Oncoprotein-induced transcript 3 protein (Oit3).